A 195-amino-acid polypeptide reads, in one-letter code: Imidazoleglycerol-phosphate dehydratase (195 aa).

The protein belongs to the imidazoleglycerol-phosphate dehydratase family.

The protein localises to the cytoplasm. The catalysed reaction is D-erythro-1-(imidazol-4-yl)glycerol 3-phosphate = 3-(imidazol-4-yl)-2-oxopropyl phosphate + H2O. It participates in amino-acid biosynthesis; L-histidine biosynthesis; L-histidine from 5-phospho-alpha-D-ribose 1-diphosphate: step 6/9. This chain is Imidazoleglycerol-phosphate dehydratase, found in Deinococcus radiodurans (strain ATCC 13939 / DSM 20539 / JCM 16871 / CCUG 27074 / LMG 4051 / NBRC 15346 / NCIMB 9279 / VKM B-1422 / R1).